The chain runs to 125 residues: Crustacean hyperglycemic hormones 5 (125 aa).

Residues 1–34 (MKPGNTSFNMVSFRMVWTAMMATLLVAGASSAGT) form the signal peptide. Disulfide bonds link Cys-58/Cys-94, Cys-74/Cys-90, and Cys-77/Cys-103. Valine amide is present on Val-123.

This sequence belongs to the arthropod CHH/MIH/GIH/VIH hormone family. Produced by the medulla terminalis X-organ in the eyestalks and transported to the sinus gland where they are stored and released.

The protein resides in the secreted. In terms of biological role, hormone found in the sinus gland of isopods and decapods which controls the blood sugar level. Has a secretagogue action over the amylase released from the midgut gland. May act as a stress hormone and may be involved in the control of molting and reproduction. The polypeptide is Crustacean hyperglycemic hormones 5 (Penaeus japonicus (Kuruma prawn)).